A 256-amino-acid chain; its full sequence is MSETIKDIKSKLQHMLSISELERSEYNNDARKGVQNAMIQRRKQLEKEQVLLDNYVKMTEFENSILAENPDALICGIDEVGRGPLAGPVVTCAVILNKNHHFTGLNDSKKLSAKQRHSIESKLLNDVYAYAYGYASVEEIDEINIYEATKLAMHRAIEGLRIKPTHLLVDAMTLDIDIPQTSLIKGDAKSVSIAAASVLAKEHRDQYMRDLGRKYPGYSFENNVGYGTQQHLDGIKKYGILNEHRKTFEPIKSLVN.

The region spanning 72–256 (ALICGIDEVG…TFEPIKSLVN (185 aa)) is the RNase H type-2 domain. Positions 78, 79, and 170 each coordinate a divalent metal cation.

This sequence belongs to the RNase HII family. Mn(2+) serves as cofactor. Mg(2+) is required as a cofactor.

It localises to the cytoplasm. The enzyme catalyses Endonucleolytic cleavage to 5'-phosphomonoester.. Endonuclease that specifically degrades the RNA of RNA-DNA hybrids. The chain is Ribonuclease HII from Staphylococcus saprophyticus subsp. saprophyticus (strain ATCC 15305 / DSM 20229 / NCIMB 8711 / NCTC 7292 / S-41).